A 681-amino-acid chain; its full sequence is Potassium-transporting ATPase ATP-binding subunit (681 aa).

4 helical membrane passes run 30-50 (LLVYVGAILATSLYFLGFFGI), 59-79 (LAIALILWFTVLFANFAEAIA), 216-236 (ILLVTLSIIFLTVSATLLPFT), and 255-275 (IALLVCLAPTTIGALLSSIGI). The active-site 4-aspartylphosphate intermediate is the D306. ATP is bound by residues D343, E347, 376–383 (FTATTRMS), and K394. 2 residues coordinate Mg(2+): D517 and D521. The next 3 membrane-spanning stretches (helical) occupy residues 587–607 (FAIIPVLFYGIFPQLEALNLM), 615–635 (AILSAIIYNAVIIIILIPLSL), and 661–681 (LIAPFIAIKLIDMLLTVLGIV).

It belongs to the cation transport ATPase (P-type) (TC 3.A.3) family. Type IA subfamily. As to quaternary structure, the system is composed of three essential subunits: KdpA, KdpB and KdpC.

It localises to the cell membrane. The enzyme catalyses K(+)(out) + ATP + H2O = K(+)(in) + ADP + phosphate + H(+). Part of the high-affinity ATP-driven potassium transport (or Kdp) system, which catalyzes the hydrolysis of ATP coupled with the electrogenic transport of potassium into the cytoplasm. This subunit is responsible for energy coupling to the transport system and for the release of the potassium ions to the cytoplasm. In Listeria monocytogenes serotype 4a (strain HCC23), this protein is Potassium-transporting ATPase ATP-binding subunit.